Consider the following 79-residue polypeptide: Small ribosomal subunit protein bS21 (79 aa).

The tract at residues 58-79 (ARKKMQREGLLPMKPKPMPGMR) is disordered.

This sequence belongs to the bacterial ribosomal protein bS21 family.

The polypeptide is Small ribosomal subunit protein bS21 (Beijerinckia indica subsp. indica (strain ATCC 9039 / DSM 1715 / NCIMB 8712)).